A 231-amino-acid chain; its full sequence is Putative histone H1.9 (231 aa).

The 65-residue stretch at glutamine 113–lysine 177 folds into the H15 domain. Position 135 is a phosphoserine (serine 135). The tract at residues lysine 177–glycine 214 is disordered. Basic residues predominate over residues glutamine 179 to arginine 194.

This sequence belongs to the histone H1/H5 family. In terms of tissue distribution, expressed exclusively in the testis.

Its subcellular location is the nucleus. The protein resides in the chromosome. Its function is as follows. DNA-binding protein that may be implicated in chromatin remodeling and/or transcriptional regulation during spermiogenesis, the process of spermatid maturation into spermatozoa. This is Putative histone H1.9 from Homo sapiens (Human).